Here is a 432-residue protein sequence, read N- to C-terminus: Testis-specific Y-encoded-like protein 1 (432 aa).

Disordered regions lie at residues 1 to 31, 54 to 110, and 116 to 135; these read MSGRDGGERTPLLEAHSLTTSDCAAGAPDPS, ALPP…LETA, and TDDSLGNGCQPGEPQGLSRE. A Glycyl lysine isopeptide (Lys-Gly) (interchain with G-Cter in SUMO2) cross-link involves residue lysine 160.

The protein belongs to the nucleosome assembly protein (NAP) family. Post-translationally, ubiquitinated by the CRL2(APPBP2) complex, which recognizes the Arg-Xaa-Xaa-Gly sequence at the C-terminus, leading to its degradation.

The protein localises to the nucleus. The protein resides in the nucleolus. The protein is Testis-specific Y-encoded-like protein 1 (TSPYL1) of Bos taurus (Bovine).